Here is a 2344-residue protein sequence, read N- to C-terminus: Genome polyprotein (2344 aa).

Residues 492 to 653 (QKVISDLHTM…ESWQATRHGS (162 aa)) enclose the SF3 helicase domain. 522 to 529 (GAPGIGKT) contacts ATP. Position 1014 is an O-(5'-phospho-RNA)-tyrosine (Tyr1014). An O-UMP-tyrosine; transient modification is found at Tyr1014. Positions 1109 to 1244 (GLPGFMRHNG…SKMCTLIDLT (136 aa)) constitute a Peptidase C24 domain. Catalysis depends on for 3CLpro activity residues His1135, Asp1152, and Cys1212. A RdRp catalytic domain is found at 1495-1619 (SDFLCLDYSK…AMTPMMVSLL (125 aa)). Cys1584 and Cys1591 are disulfide-bonded. The tract at residues 1771-1796 (RTAPQGEAAGTATTASVPGTTTDGMD) is disordered. The span at 1778 to 1794 (AAGTATTASVPGTTTDG) shows a compositional bias: low complexity.

As to quaternary structure, homodimer. In terms of assembly, homomultimer. Interacts with host type II histo-blood group structures antigens at the surface of target cells. The cofactor is Mn(2+). In terms of processing, specific enzymatic cleavages by its own cysteine protease yield mature proteins. The protease cleaves itself from the nascent polyprotein autocatalytically. Precursor p41 can be cleaved by viral 3CLpro into protein p19 and VPg, or cleaved by host protease into protein p23/2 and protein p18. VPg is uridylylated by the polymerase and is covalently attached to the 5'-end of the polyadenylated genomic and subgenomic RNAs. This uridylylated form acts as a nucleotide-peptide primer for the polymerase.

The protein localises to the host cytoplasm. The protein resides in the host endoplasmic reticulum. Its subcellular location is the virion. The enzyme catalyses a ribonucleoside 5'-triphosphate + H2O = a ribonucleoside 5'-diphosphate + phosphate + H(+). It carries out the reaction Endopeptidase with a preference for cleavage when the P1 position is occupied by Glu-|-Xaa and the P1' position is occupied by Gly-|-Yaa.. It catalyses the reaction RNA(n) + a ribonucleoside 5'-triphosphate = RNA(n+1) + diphosphate. In terms of biological role, together with NTPase and NS4, initiates the formation of the replication complex. Induces the proliferation of the host smooth ER membranes forming long tubular structures. These remodeled membranes probably form the viral factories that contain the replication complex. Its function is as follows. Displays NTPase activity, but no helicase activity. Induces the formation of convoluted membranes derived from the host ER. These remodeled membranes probably form the viral factories that contain the replication complex. Together with NS2 and NS4, initiates the formation of the replication complex. Functionally, probable key protein responsible for the formation of membrane alterations by the virus. Induces the formation of convoluted membranes derived from the host ER. These remodeled membranes probably form the viral factories that contain the replication complex. Together with NS2 and NTPase, initiates the formation of the replication complex. Viral genome-linked protein is covalently linked to the 5'-end of the positive-strand, negative-strand genomic RNAs and subgenomic RNA. Acts as a genome-linked replication primer. May recruit ribosome to viral RNA thereby promoting viral proteins translation. Interacts with host translation initiation complex to allow the translation of viral proteins. In terms of biological role, processes the polyprotein. 3CLpro-RdRp is first released by autocleavage, then all other proteins are cleaved. May cleave polyadenylate-binding protein thereby inhibiting cellular translation. Its function is as follows. Replicates genomic and antigenomic RNA by recognizing replications specific signals. Also transcribes a subgenomic mRNA by initiating RNA synthesis internally on antigenomic RNA. This sgRNA codes for structural proteins. Catalyzes the covalent attachment VPg with viral RNAs. Functionally, capsid protein VP60 self assembles to form an icosahedral capsid with a T=3 symmetry, about 35 nm in diameter, and consisting of 180 capsid proteins. A smaller form of capsid with a diameter of 23 nm might be capsid proteins assembled as icosahedron with T=1 symmetry. The capsid encapsulate VP2 proteins and genomic or subgenomic RNA. Attaches virion to target cells by binding histo-blood group antigens, inducing endocytosis of the viral particle. Acidification of the endosome induces conformational change of capsid protein thereby injecting virus genomic RNA into host cytoplasm. This Rabbit hemorrhagic disease virus (strain SD) (Ra/LV/RHDV/SD/1989/FR) protein is Genome polyprotein.